The primary structure comprises 276 residues: Diaminopimelate epimerase (276 aa).

Substrate contacts are provided by asparagine 13, glutamine 46, and asparagine 66. Cysteine 75 serves as the catalytic Proton donor. Substrate contacts are provided by residues 76 to 77, asparagine 159, asparagine 192, and 210 to 211; these read GN and ER. Cysteine 219 (proton acceptor) is an active-site residue. 220-221 is a binding site for substrate; that stretch reads GS.

Belongs to the diaminopimelate epimerase family. Homodimer.

It localises to the cytoplasm. The catalysed reaction is (2S,6S)-2,6-diaminopimelate = meso-2,6-diaminopimelate. It participates in amino-acid biosynthesis; L-lysine biosynthesis via DAP pathway; DL-2,6-diaminopimelate from LL-2,6-diaminopimelate: step 1/1. In terms of biological role, catalyzes the stereoinversion of LL-2,6-diaminopimelate (L,L-DAP) to meso-diaminopimelate (meso-DAP), a precursor of L-lysine and an essential component of the bacterial peptidoglycan. This Pseudoalteromonas atlantica (strain T6c / ATCC BAA-1087) protein is Diaminopimelate epimerase.